A 219-amino-acid chain; its full sequence is GTP-binding protein Rit1 (219 aa).

GTP is bound by residues 28 to 35 (GAGGVGKS), 75 to 79 (DTAGQ), and 134 to 137 (NKSD).

Belongs to the small GTPase superfamily. Ras family. Interacts with AFDN, the C-terminal domain of RALGDS and RLF, but not with RIN1 and PIK3CA. RLF binds exclusively to the active GTP-bound form. Strongly interacts with BRAF, but only weakly with RAF1. BARF and RAF1 association is dependent upon the GTP-bound state. Interacts with RGL3. Expressed in many tissues.

It is found in the cell membrane. The enzyme catalyses GTP + H2O = GDP + phosphate + H(+). Its activity is regulated as follows. Alternates between an inactive form bound to GDP and an active form bound to GTP. In terms of biological role, plays a crucial role in coupling NGF stimulation to the activation of both EPHB2 and MAPK14 signaling pathways and in NGF-dependent neuronal differentiation. Involved in ELK1 transactivation through the Ras-MAPK signaling cascade that mediates a wide variety of cellular functions, including cell proliferation, survival, and differentiation. The sequence is that of GTP-binding protein Rit1 (Rit1) from Mus musculus (Mouse).